The following is a 1009-amino-acid chain: DENN domain-containing protein 2A (1009 aa).

4 disordered regions span residues 15–153 (AEAS…LRFQ), 171–334 (KDGS…HRKS), 434–479 (KLLD…KKRK), and 498–532 (KRVK…LKAH). Basic and acidic residues-rich tracts occupy residues 45–59 (NIKD…KKEV), 130–147 (QPER…EPRL), 218–247 (HPSD…DRSL), and 275–284 (HAGEGDKDGK). The segment covering 297–314 (PPLPSLPPPPLPSSPPPS) has biased composition (pro residues). Positions 434 to 443 (KLLDTRKLSR) are enriched in basic and acidic residues. Positions 503 to 513 (LSQSMESNSGK) are enriched in polar residues. A Phosphoserine modification is found at Ser-551. The uDENN domain maps to 566–715 (EYFVVVSLHK…PFPALGKTIL (150 aa)). Residues 737–870 (RLEHVDFESL…LQVALEHILE (134 aa)) enclose the cDENN domain. In terms of domain architecture, dDENN spans 872–969 (RNELACEQDE…QERELRRQDA (98 aa)).

The protein localises to the cytoplasm. Its subcellular location is the cytoskeleton. Functionally, guanine nucleotide exchange factor (GEF) which may activate RAB9A and RAB9B. Promotes the exchange of GDP to GTP, converting inactive GDP-bound Rab proteins into their active GTP-bound form. May play a role in late endosomes back to trans-Golgi network/TGN transport. The sequence is that of DENN domain-containing protein 2A (DENND2A) from Homo sapiens (Human).